Here is a 355-residue protein sequence, read N- to C-terminus: C-C chemokine receptor type 8 (355 aa).

Residues 1–35 (MDYTLDLSVTTVTDYYYPDIFSSPCDAELIQTNGK) lie on the Extracellular side of the membrane. The chain crosses the membrane as a helical span at residues 36-63 (LLLAVFYCLLFVFSLLGNSLVILVLVVC). The Cytoplasmic portion of the chain corresponds to 64-73 (KKLRSITDVY). The chain crosses the membrane as a helical span at residues 74 to 93 (LLNLALSDLLFVFSFPFQTY). The Extracellular portion of the chain corresponds to 94–107 (YLLDQWVFGTVMCK). Residues Cys106 and Cys183 are joined by a disulfide bond. A helical membrane pass occupies residues 108–129 (VVSGFYYIGFYSSMFFITLMSV). Residues 130–146 (DRYLAVVHAVYALKVRT) lie on the Cytoplasmic side of the membrane. Residues 147 to 171 (IRMGTTLCLAVWLTAIMATIPLLVF) form a helical membrane-spanning segment. At 172–202 (YQVASEDGVLQCYSFYNQQTLKWKIFTNFKM) the chain is on the extracellular side. Residues 203–222 (NILGLLIPFTIFMFCYIKIL) form a helical membrane-spanning segment. At 223–238 (HQLKRCQNHNKTKAIR) the chain is on the cytoplasmic side. A helical membrane pass occupies residues 239–263 (LVLIVVIASLLFWVPFNVVLFLTSL). The Extracellular segment spans residues 264–280 (HSMHILDGCSISQQLTY). The helical transmembrane segment at 281 to 304 (ATHVTEIISFTHCCVNPVIYAFVG) threads the bilayer. Over 305-355 (EKFKKHLSEIFQKSCSQIFNYLGRQMPRESCEKSSSCQQHSSRSSSVDYIL) the chain is Cytoplasmic.

This sequence belongs to the G-protein coupled receptor 1 family.

It localises to the cell membrane. In terms of biological role, receptor for the chemokine CCL1/SCYA1/I-309. May regulate monocyte chemotaxis and thymic cell line apoptosis. Alternative coreceptor with CD4 for HIV-1 infection. The chain is C-C chemokine receptor type 8 (CCR8) from Homo sapiens (Human).